Consider the following 117-residue polypeptide: Probable glycerol dehydratase-reactivating factor small subunit (117 aa).

E31 serves as a coordination point for Mg(2+).

It belongs to the DdrB/PduH family. In terms of assembly, member of the GDR complex, probably composed of DhaF(2)/DhaG(2). It depends on Mg(2+) as a cofactor.

Functionally, small subunit of the glycerol dehydratase-reactivating factor (GDR), which reactivates suicidally inhibited adenosylcobalamin-dependent glycerol dehydratase. The chain is Probable glycerol dehydratase-reactivating factor small subunit from Citrobacter freundii.